The sequence spans 466 residues: Cysteine--tRNA ligase (466 aa).

Residue cysteine 28 coordinates Zn(2+). Residues 30–40 (PTVYNFFHIGN) carry the 'HIGH' region motif. The Zn(2+) site is built by cysteine 208, histidine 233, and glutamate 237. Residues 265 to 269 (KMSKS) carry the 'KMSKS' region motif. Lysine 268 provides a ligand contact to ATP.

This sequence belongs to the class-I aminoacyl-tRNA synthetase family. As to quaternary structure, monomer. The cofactor is Zn(2+).

The protein resides in the cytoplasm. The catalysed reaction is tRNA(Cys) + L-cysteine + ATP = L-cysteinyl-tRNA(Cys) + AMP + diphosphate. The chain is Cysteine--tRNA ligase from Clostridium perfringens (strain SM101 / Type A).